A 443-amino-acid polypeptide reads, in one-letter code: Serine/threonine-protein kinase Nek2 (443 aa).

Residues 8–271 enclose the Protein kinase domain; that stretch reads YEVLHSIGTG…VEEILESPLI (264 aa). ATP contacts are provided by residues 14-22 and Lys37; that span reads IGTGSYGRC. The Proton acceptor role is filled by Asp141. The residue at position 170 (Thr170) is a Phosphothreonine; by autocatalysis. Ser171 carries the phosphoserine; by autocatalysis modification. Thr175 and Thr179 each carry phosphothreonine; by autocatalysis. Phosphoserine is present on Ser184. The residue at position 241 (Ser241) is a Phosphoserine; by autocatalysis. The tract at residues 264 to 443 is interaction with PCNT; it reads EILESPLIAD…LKSRQILGMR (180 aa). Positions 282 to 292 are enriched in basic and acidic residues; the sequence is NLERRGRRSGE. A disordered region spans residues 282–303; the sequence is NLERRGRRSGEPSKLPDSSPVL. Phosphoserine is present on Ser300. Positions 301-443 are interaction with CEP85; it reads PVLSELKLKE…LKSRQILGMR (143 aa). A coiled-coil region spans residues 303–361; sequence LSELKLKERQLQDREQALRAREDILEQKERELCIRERLAEDKLARAESLMKNYSLLKEH. Positions 306-334 are leucine-zipper; sequence LKLKERQLQDREQALRAREDILEQKEREL. The necessary for interaction with MAD1L1 stretch occupies residues 329–443; it reads QKERELCIRE…LKSRQILGMR (115 aa). Residues 333-370 form a required for microtubule binding and for localization to the centrosomes region; that stretch reads ELCIRERLAEDKLARAESLMKNYSLLKEHRLLCLAGGP. Ser356 bears the Phosphoserine; by STK3/MST2 mark. The interval 383–402 is disordered; the sequence is VHFHGESKENTARSENSESY. A compositionally biased stretch (basic and acidic residues) spans 385 to 398; it reads FHGESKENTARSEN. Residues Ser389, Ser396, and Ser401 each carry the phosphoserine modification. Residues 402–437 form an interaction with SAV1 and STK3/MST2 region; that stretch reads YLAKSKCRDLKKRLHAAQLRAQALADIEKNYQLKSR. Positions 403-427 form a coiled coil; it reads LAKSKCRDLKKRLHAAQLRAQALAD. Ser436 is subject to Phosphoserine; by STK3/MST2.

The protein belongs to the protein kinase superfamily. NEK Ser/Thr protein kinase family. NIMA subfamily. In terms of assembly, forms homodimers and heterodimers. Interacts with CDC20, CTNB1, MAD1L1, MAD2L1, MAPK, NEK11, NPM1, NDC80, PCNT, PPP1CA, PPP1CC and SGO1. Interacts with STK3/MST2 (via SARAH domain) and SAV1 (via SARAH domain). Interacts with NECAB3 and HMGA2. Interacts with CEP68; the interaction leads to phosphorylation of CEP68. Interacts with CNTLN; the interaction leads to phosphorylation of CNTLN. Interacts with CEP85. It depends on Mg(2+) as a cofactor. In terms of processing, activated by autophosphorylation. Protein phosphatase 1 represses autophosphorylation and activation of isoform 1 by dephosphorylation. Phosphorylation by STK3/MST2 is necessary for its localization to the centrosome. In terms of tissue distribution, most abundantly expressed in testis. Low levels found in mid-gestation embryo, ovary, placenta, intestine, thymus and skin. Within the testis, expression restricted to germ cells with highest levels detected in spermatocytes at pachytene and diplotene stages. Also expressed in meiotic pachytene oocytes.

It is found in the nucleus. The protein resides in the nucleolus. Its subcellular location is the cytoplasm. It localises to the cytoskeleton. The protein localises to the microtubule organizing center. It is found in the centrosome. The protein resides in the spindle pole. Its subcellular location is the chromosome. It localises to the centromere. The protein localises to the kinetochore. It catalyses the reaction L-seryl-[protein] + ATP = O-phospho-L-seryl-[protein] + ADP + H(+). The catalysed reaction is L-threonyl-[protein] + ATP = O-phospho-L-threonyl-[protein] + ADP + H(+). Its activity is regulated as follows. Its catalytic activity is inhibited by the inhibitor CCT241950. In the presence of this inhibitor, displays an autoinhibited conformation: Tyr-70 side chain points into the active site, interacts with the activation loop, and blocks the alphaC helix. Functionally, protein kinase which is involved in the control of centrosome separation and bipolar spindle formation in mitotic cells and chromatin condensation in meiotic cells. Regulates centrosome separation (essential for the formation of bipolar spindles and high-fidelity chromosome separation) by phosphorylating centrosomal proteins such as CROCC, CEP250 and NINL, resulting in their displacement from the centrosomes. Regulates kinetochore microtubule attachment stability in mitosis via phosphorylation of NDC80. Involved in regulation of mitotic checkpoint protein complex via phosphorylation of CDC20 and MAD2L1. Plays an active role in chromatin condensation during the first meiotic division through phosphorylation of HMGA2. Phosphorylates: PPP1CC; SGO1; NECAB3 and NPM1. Essential for localization of MAD2L1 to kinetochore and MAPK1 and NPM1 to the centrosome. Phosphorylates CEP68 and CNTLN directly or indirectly. NEK2-mediated phosphorylation of CEP68 promotes CEP68 dissociation from the centrosome and its degradation at the onset of mitosis. Phosphorylates and activates NEK11 in G1/S-arrested cells. Involved in the regulation of centrosome disjunction. The chain is Serine/threonine-protein kinase Nek2 (Nek2) from Mus musculus (Mouse).